Reading from the N-terminus, the 217-residue chain is Large ribosomal subunit protein uL4 (217 aa).

Positions 42 to 100 (RAAARQGTHSTKTRGDVSGGGRKPYRQKGTGRARQGSTRAPQFTGGGVVHGPKPRDYSQ) are disordered.

This sequence belongs to the universal ribosomal protein uL4 family. Part of the 50S ribosomal subunit.

In terms of biological role, one of the primary rRNA binding proteins, this protein initially binds near the 5'-end of the 23S rRNA. It is important during the early stages of 50S assembly. It makes multiple contacts with different domains of the 23S rRNA in the assembled 50S subunit and ribosome. Functionally, forms part of the polypeptide exit tunnel. The sequence is that of Large ribosomal subunit protein uL4 from Mycolicibacterium paratuberculosis (strain ATCC BAA-968 / K-10) (Mycobacterium paratuberculosis).